The sequence spans 26 residues: MIPAQFTYRRVSSVDEALAAVAEHGD.

In terms of assembly, heterotrimer composed of an alpha, a beta and a gamma chain. Requires FAD as cofactor.

The catalysed reaction is an aldehyde + a quinone + H2O = a quinol + a carboxylate + H(+). The chain is Aldehyde dehydrogenase beta chain from Amycolatopsis methanolica.